Here is a 260-residue protein sequence, read N- to C-terminus: DNA repair protein RecO (260 aa).

This sequence belongs to the RecO family.

In terms of biological role, involved in DNA repair and RecF pathway recombination. The chain is DNA repair protein RecO from Paracidovorax citrulli (strain AAC00-1) (Acidovorax citrulli).